Consider the following 121-residue polypeptide: Large ribosomal subunit protein uL18 (121 aa).

Belongs to the universal ribosomal protein uL18 family. In terms of assembly, part of the 50S ribosomal subunit; part of the 5S rRNA/L5/L18/L25 subcomplex. Contacts the 5S and 23S rRNAs.

Its function is as follows. This is one of the proteins that bind and probably mediate the attachment of the 5S RNA into the large ribosomal subunit, where it forms part of the central protuberance. This Anaplasma phagocytophilum (strain HZ) protein is Large ribosomal subunit protein uL18.